We begin with the raw amino-acid sequence, 426 residues long: Serine hydroxymethyltransferase (426 aa).

Residues Leu113 and 117–119 (GHL) each bind (6S)-5,6,7,8-tetrahydrofolate. An N6-(pyridoxal phosphate)lysine modification is found at Lys222. A (6S)-5,6,7,8-tetrahydrofolate-binding site is contributed by 363–365 (SAF).

This sequence belongs to the SHMT family. Homodimer. It depends on pyridoxal 5'-phosphate as a cofactor.

The protein resides in the cytoplasm. It carries out the reaction (6R)-5,10-methylene-5,6,7,8-tetrahydrofolate + glycine + H2O = (6S)-5,6,7,8-tetrahydrofolate + L-serine. It participates in one-carbon metabolism; tetrahydrofolate interconversion. It functions in the pathway amino-acid biosynthesis; glycine biosynthesis; glycine from L-serine: step 1/1. Its function is as follows. Catalyzes the reversible interconversion of serine and glycine with tetrahydrofolate (THF) serving as the one-carbon carrier. This reaction serves as the major source of one-carbon groups required for the biosynthesis of purines, thymidylate, methionine, and other important biomolecules. Also exhibits THF-independent aldolase activity toward beta-hydroxyamino acids, producing glycine and aldehydes, via a retro-aldol mechanism. The sequence is that of Serine hydroxymethyltransferase from Bacteroides thetaiotaomicron (strain ATCC 29148 / DSM 2079 / JCM 5827 / CCUG 10774 / NCTC 10582 / VPI-5482 / E50).